The following is a 1275-amino-acid chain: Rho1 guanine nucleotide exchange factor 3 (1275 aa).

4 disordered regions span residues Met-1–Lys-42, Ser-56–Ala-113, Asn-131–Ser-188, and Leu-214–Leu-248. Over residues Leu-7 to Gly-17 the composition is skewed to basic and acidic residues. Polar residues-rich tracts occupy residues Pro-32–Lys-42, Ala-80–Ala-113, and Ser-142–Asp-151. 2 stretches are compositionally biased toward low complexity: residues Ser-178–Ser-188 and Leu-214–Arg-228. Ser-293 bears the Phosphoserine mark. The DH domain maps to Ala-465 to Val-657. In terms of domain architecture, PH spans Glu-692 to Lys-855. One can recognise a CNH domain in the interval Tyr-930 to Leu-1239.

It is found in the cytoplasm. Functionally, stimulates the exchange of Rho1 GDP-bound form into GTP-bound form. Regulates, via interaction and activation of Rho1, beta-1,3-glucan biosynthesis and cell wall integrity during septation. Involved in the regulation of contractile ring assembly. This is Rho1 guanine nucleotide exchange factor 3 (rgf3) from Schizosaccharomyces pombe (strain 972 / ATCC 24843) (Fission yeast).